The following is a 264-amino-acid chain: Proliferating cell nuclear antigen 2 (264 aa).

Belongs to the PCNA family. Homotrimer. Oligomer. Interacts with ORC1 (via PIP-box motif). Interacts with FEN1.

The protein localises to the nucleus. It localises to the chromosome. It is found in the cytoplasm. May be involved in DNA damage response. Appears not to be involved in DNA replication in trophozoites. The sequence is that of Proliferating cell nuclear antigen 2 from Plasmodium falciparum (isolate 3D7).